Here is a 271-residue protein sequence, read N- to C-terminus: S-adenosylmethionine decarboxylase proenzyme (271 aa).

The active-site Schiff-base intermediate with substrate; via pyruvic acid is serine 121. The residue at position 121 (serine 121) is a Pyruvic acid (Ser); by autocatalysis. The active-site Proton acceptor; for processing activity is the histidine 126. Cysteine 149 functions as the Proton donor; for catalytic activity in the catalytic mechanism.

Belongs to the prokaryotic AdoMetDC family. Type 2 subfamily. As to quaternary structure, heterooctamer of four alpha and four beta chains arranged as a tetramer of alpha/beta heterodimers. Pyruvate serves as cofactor. Post-translationally, is synthesized initially as an inactive proenzyme. Formation of the active enzyme involves a self-maturation process in which the active site pyruvoyl group is generated from an internal serine residue via an autocatalytic post-translational modification. Two non-identical subunits are generated from the proenzyme in this reaction, and the pyruvate is formed at the N-terminus of the alpha chain, which is derived from the carboxyl end of the proenzyme. The post-translation cleavage follows an unusual pathway, termed non-hydrolytic serinolysis, in which the side chain hydroxyl group of the serine supplies its oxygen atom to form the C-terminus of the beta chain, while the remainder of the serine residue undergoes an oxidative deamination to produce ammonia and the pyruvoyl group blocking the N-terminus of the alpha chain.

The enzyme catalyses S-adenosyl-L-methionine + H(+) = S-adenosyl 3-(methylsulfanyl)propylamine + CO2. Its pathway is amine and polyamine biosynthesis; S-adenosylmethioninamine biosynthesis; S-adenosylmethioninamine from S-adenosyl-L-methionine: step 1/1. Functionally, catalyzes the decarboxylation of S-adenosylmethionine to S-adenosylmethioninamine (dcAdoMet), the propylamine donor required for the synthesis of the polyamines spermine and spermidine from the diamine putrescine. This is S-adenosylmethionine decarboxylase proenzyme from Clostridium perfringens (strain SM101 / Type A).